Reading from the N-terminus, the 461-residue chain is Transcription factor phm6 (461 aa).

Residues 18-50 (CNRCRNHKLKCVVTEAPNGTACCQRCIRAMVPC) constitute a DNA-binding region (zn(2)-C6 fungal-type). Disordered regions lie at residues 55-79 (RERKKRGSSPRVVPQSPWMHSPWET) and 256-278 (LQTDDSSSTQSESSRSRASVGAT). Positions 256 to 274 (LQTDDSSSTQSESSRSRAS) are enriched in low complexity.

The protein localises to the nucleus. Its function is as follows. Transcription factor that regulates the expression of the gene cluster that mediates the biosynthesis of the trans-fused decalin-containing tetramic acid phomasetin. This chain is Transcription factor phm6, found in Pyrenochaetopsis sp.